Reading from the N-terminus, the 61-residue chain is Small ribosomal subunit protein uS14 (61 aa).

Residues Cys-24, Cys-27, Cys-40, and Cys-43 each contribute to the Zn(2+) site.

Belongs to the universal ribosomal protein uS14 family. Zinc-binding uS14 subfamily. As to quaternary structure, part of the 30S ribosomal subunit. Contacts proteins S3 and S10. The cofactor is Zn(2+).

Binds 16S rRNA, required for the assembly of 30S particles and may also be responsible for determining the conformation of the 16S rRNA at the A site. In Caldanaerobacter subterraneus subsp. tengcongensis (strain DSM 15242 / JCM 11007 / NBRC 100824 / MB4) (Thermoanaerobacter tengcongensis), this protein is Small ribosomal subunit protein uS14.